The primary structure comprises 66 residues: MRWLMRKCIRCGRYTLNHDRCPYCGGELIVPHPPRFSPEDKYVAYRLEMKIKTGILDLNKIPVYDP.

It belongs to the NOP10 family.

In terms of biological role, involved in ribosome biogenesis; more specifically in 18S rRNA pseudouridylation and in cleavage of pre-rRNA. The polypeptide is Ribosome biogenesis protein Nop10 (Staphylothermus marinus (strain ATCC 43588 / DSM 3639 / JCM 9404 / F1)).